The sequence spans 219 residues: Adenylate kinase (219 aa).

13–18 contributes to the ATP binding site; sequence GAGKGT. Residues 33-62 form an NMP region; it reads STGDIFRAAIKNETKMGLEAKKYIDAGNLV. AMP-binding positions include Thr34, Arg39, 60–62, 88–91, and Gln95; these read NLV and GYPR. Residues 129 to 167 form an LID region; the sequence is GRFICRTCGATYHKLYNKPKVEGTCDVCGGHDFYQRDDD. Residue Arg130 participates in ATP binding. Cys133 and Cys136 together coordinate Zn(2+). ATP is bound at residue 139-140; that stretch reads TY. Cys153 and Cys156 together coordinate Zn(2+). AMP contacts are provided by Arg164 and Arg175. Arg203 contributes to the ATP binding site.

This sequence belongs to the adenylate kinase family. As to quaternary structure, monomer.

The protein localises to the cytoplasm. The enzyme catalyses AMP + ATP = 2 ADP. It participates in purine metabolism; AMP biosynthesis via salvage pathway; AMP from ADP: step 1/1. In terms of biological role, catalyzes the reversible transfer of the terminal phosphate group between ATP and AMP. Plays an important role in cellular energy homeostasis and in adenine nucleotide metabolism. The sequence is that of Adenylate kinase from Lactiplantibacillus plantarum (strain ATCC BAA-793 / NCIMB 8826 / WCFS1) (Lactobacillus plantarum).